The primary structure comprises 145 residues: Early nodulin-like protein 21 (145 aa).

The first 17 residues, 1–17 (MFLWLVIVLTISASVSS), serve as a signal peptide directing secretion. The Phytocyanin domain maps to 18–116 (YEHKLNWVVP…GQKMIVEVIS (99 aa)). N-linked (GlcNAc...) asparagine glycosylation is found at asparagine 30 and asparagine 71. Cysteine 70 and cysteine 104 are oxidised to a cystine. Serine 116 is lipidated: GPI-anchor amidated serine. A propeptide spans 117–145 (RDHTTTSAAPPAAFAVLLCFFSLSLYFVA) (removed in mature form).

This sequence belongs to the early nodulin-like (ENODL) family. In terms of tissue distribution, mostly expressed in leaves and flowers, and, to a lower extent, in roots and stems, but barely in seedlings and seeds.

Its subcellular location is the cell membrane. May act as a carbohydrate transporter. This Arabidopsis thaliana (Mouse-ear cress) protein is Early nodulin-like protein 21.